Reading from the N-terminus, the 101-residue chain is Urease subunit beta (101 aa).

Belongs to the urease beta subunit family. As to quaternary structure, heterotrimer of UreA (gamma), UreB (beta) and UreC (alpha) subunits. Three heterotrimers associate to form the active enzyme.

The protein resides in the cytoplasm. The catalysed reaction is urea + 2 H2O + H(+) = hydrogencarbonate + 2 NH4(+). Its pathway is nitrogen metabolism; urea degradation; CO(2) and NH(3) from urea (urease route): step 1/1. In Pseudomonas paraeruginosa (strain DSM 24068 / PA7) (Pseudomonas aeruginosa (strain PA7)), this protein is Urease subunit beta.